The primary structure comprises 365 residues: Tubulin-like protein CetZ (365 aa).

GTP is bound by residues 10-14 (QCGGK), 103-105 (GTG), E136, N163, and N181.

It belongs to the CetZ family.

The protein resides in the cytoplasm. Functionally, involved in cell shape control. This is Tubulin-like protein CetZ from Pyrococcus abyssi (strain GE5 / Orsay).